The sequence spans 345 residues: Nuclear egress protein 1 (345 aa).

The CCCH-type zinc finger occupies 115–247 (CISLSEMGYT…FVFKPGSPLH (133 aa)).

Belongs to the herpesviridae NEC1 protein family. As to quaternary structure, forms a heterohexameric complex with NEC2. Interacts with capsid vertex specific component 2/CVC2; this interaction directs the capsid to the host inner nuclear membrane to initiate budding. In terms of processing, phosphorylated at serine residues in the N-terminus. This phosphorylation regulates the localization within the inner nuclear membrane.

Its subcellular location is the host nucleus inner membrane. Its function is as follows. Plays an essential role in virion nuclear egress, the first step of virion release from infected cell. Within the host nucleus, NEC1 interacts with the newly formed capsid through the vertexes and directs it to the inner nuclear membrane by associating with NEC2. Induces the budding of the capsid at the inner nuclear membrane as well as its envelopment into the perinuclear space. There, the NEC1/NEC2 complex promotes the fusion of the enveloped capsid with the outer nuclear membrane and the subsequent release of the viral capsid into the cytoplasm where it will reach the secondary budding sites in the host Golgi or trans-Golgi network. The protein is Nuclear egress protein 1 of Psittacid herpesvirus 1 (isolate Amazon parrot/-/97-0001/1997) (PsHV-1).